The sequence spans 205 residues: Dihydrofolate reductase (205 aa).

The 201-residue stretch at 1–201 folds into the DHFR domain; sequence MLALVVALAS…TSFKMFLYTK (201 aa). NADP(+) is bound by residues alanine 7 and 13-19; that span reads GIGNANA. Residue 29 to 34 participates in substrate binding; the sequence is DMAWFR. 62-64 contacts NADP(+); sequence RRT. Arginine 78 is a binding site for substrate. Residues 84 to 86 and 118 to 125 each bind NADP(+); these read SRG and GGRDVYSL.

Belongs to the dihydrofolate reductase family.

It carries out the reaction (6S)-5,6,7,8-tetrahydrofolate + NADP(+) = 7,8-dihydrofolate + NADPH + H(+). It functions in the pathway cofactor biosynthesis; tetrahydrofolate biosynthesis; 5,6,7,8-tetrahydrofolate from 7,8-dihydrofolate: step 1/1. Its function is as follows. Key enzyme in folate metabolism. Catalyzes an essential reaction for de novo glycine and purine synthesis, and for DNA precursor synthesis. The polypeptide is Dihydrofolate reductase (DHFR-1) (Encephalitozoon cuniculi (strain GB-M1) (Microsporidian parasite)).